A 210-amino-acid polypeptide reads, in one-letter code: Kalata-B2 (210 aa).

The signal sequence occupies residues 1–22 (MAKFTNCLVLSLLLAAFVGAFG). A propeptide spanning residues 23–66 (AEFSEADKATLVNDIAENIQKEILGEVKTSETVLTMFLKEMQLK) is cleaved from the precursor. The segment at residues 67 to 95 (GLPVCGETCFGGTCNTPGCSCTWPICTRD) is a cross-link (cyclopeptide (Gly-Asp)). 3 cysteine pairs are disulfide-bonded: C71/C85, C75/C87, and C80/C92. Positions 96-120 (SLPMRAGGKTSETTLHMFLKEMQLK) are excised as a propeptide. Residues 121–149 (GLPVCGETCFGGTCNTPGCSCTWPICTRD) constitute a cross-link (cyclopeptide (Gly-Asp)). 3 cysteine pairs are disulfide-bonded: C125-C139, C129-C141, and C134-C146. The propeptide occupies 150 to 174 (SLPMSAGGKTSETTLHMFLKEMQLK). The cyclopeptide (Gly-Asp) cross-link spans 175-203 (GLPVCGETCFGGTCNTPGCSCTWPICTRD). 3 disulfide bridges follow: C179–C193, C183–C195, and C188–C200. Residues 204 to 210 (SLPLVAA) constitute a propeptide that is removed on maturation.

Belongs to the cyclotide family. Moebius subfamily. Post-translationally, kalata-B2 is a cyclic peptide which occurs in three forms: with unmodified Trp, with Trp oxidized to form N-formylkynurenine and with Trp oxidized to form kynurenine. Oxidation is enhanced by exposure to sunlight.

In terms of biological role, probably participates in a plant defense mechanism. Inhibitory effect on the growth and development of larvae from Helicoverpa punctigera. Has hemolytic activity. The protein is Kalata-B2 (OAK4) of Oldenlandia affinis.